Consider the following 682-residue polypeptide: Actin-binding LIM protein 3 (682 aa).

Position 1 is an N-acetylmethionine (Met-1). 4 consecutive LIM zinc-binding domains span residues 21 to 80 (IQCY…LYGT), 80 to 140 (TRCD…MTSS), 149 to 208 (SHCA…QFGI), and 208 to 268 (IKCE…ARAE). Ser-277, Ser-280, Ser-282, Ser-286, Ser-290, Ser-337, Ser-372, and Ser-373 each carry phosphoserine. Disordered stretches follow at residues 372–426 (SSPG…SYQA) and 440–475 (YRKP…PAYS). At Tyr-376 the chain carries Phosphotyrosine. Ser-379 and Ser-388 each carry phosphoserine. Composition is skewed to polar residues over residues 380-393 (PTYS…TFSR), 405-425 (GRSS…TSYQ), and 453-466 (STAT…DISQ). Phosphoserine occurs at positions 492, 502, and 503. Phosphothreonine is present on Thr-542. Residues Ser-566, Ser-575, and Ser-606 each carry the phosphoserine modification. Residues 614–682 (MREYKIYPYE…NELKKQARLF (69 aa)) enclose the HP domain. Omega-N-methylarginine is present on Arg-630.

As to quaternary structure, directly interacts with F-actin and ABRA. Expressed in heart, brain, lung and liver. In the brain, highly expressed in the olfactory bulb. In the hippocampus, expressed selectively in the CA2 and CA3 fields. In the cerebellum, expressed in internal granular cells.

The protein resides in the cytoplasm. May act as scaffold protein. May stimulate ABRA activity and ABRA-dependent SRF transcriptional activity. This Mus musculus (Mouse) protein is Actin-binding LIM protein 3 (Ablim3).